A 253-amino-acid polypeptide reads, in one-letter code: Ditrans,polycis-undecaprenyl-diphosphate synthase ((2E,6E)-farnesyl-diphosphate specific) (253 aa).

The active site involves D26. D26 is a Mg(2+) binding site. Substrate is bound by residues 27-30 (GNGR), W31, R39, H43, and 71-73 (SSE). N74 acts as the Proton acceptor in catalysis. Substrate is bound by residues W75, R77, and R194. H199 is a Mg(2+) binding site. 200 to 202 (RIS) contacts substrate. E213 lines the Mg(2+) pocket.

It belongs to the UPP synthase family. Homodimer. Mg(2+) is required as a cofactor.

The enzyme catalyses 8 isopentenyl diphosphate + (2E,6E)-farnesyl diphosphate = di-trans,octa-cis-undecaprenyl diphosphate + 8 diphosphate. Functionally, catalyzes the sequential condensation of isopentenyl diphosphate (IPP) with (2E,6E)-farnesyl diphosphate (E,E-FPP) to yield (2Z,6Z,10Z,14Z,18Z,22Z,26Z,30Z,34E,38E)-undecaprenyl diphosphate (di-trans,octa-cis-UPP). UPP is the precursor of glycosyl carrier lipid in the biosynthesis of bacterial cell wall polysaccharide components such as peptidoglycan and lipopolysaccharide. In Shigella flexneri, this protein is Ditrans,polycis-undecaprenyl-diphosphate synthase ((2E,6E)-farnesyl-diphosphate specific).